Consider the following 412-residue polypeptide: Diphosphomevalonate decarboxylase MVD1, peroxisomal (412 aa).

23 to 26 (YWGK) serves as a coordination point for (R)-5-diphosphomevalonate. Positions 40-48 (SVTLDPDHL) match the Peroxisomal targeting signal PTS2 motif. (R)-5-diphosphomevalonate-binding positions include R78, 161 to 166 (SGSACR), and T217.

The protein belongs to the diphosphomevalonate decarboxylase family. In terms of assembly, homodimer.

It is found in the peroxisome. It catalyses the reaction (R)-5-diphosphomevalonate + ATP = isopentenyl diphosphate + ADP + phosphate + CO2. It participates in isoprenoid biosynthesis; isopentenyl diphosphate biosynthesis via mevalonate pathway; isopentenyl diphosphate from (R)-mevalonate: step 3/3. Functionally, performs the first committed step in the biosynthesis of isoprene-containing compounds such as sterols and terpenoids. Is specific for (R)-5-diphosphomevalonate (MVAPP). The catalytic efficiency with (R)-5-phosphomevalonate (MVAP) as substrate is 10000-fold lower than for MVAPP. Can complement a yeast mutant defective in MVD activity. In Arabidopsis thaliana (Mouse-ear cress), this protein is Diphosphomevalonate decarboxylase MVD1, peroxisomal.